We begin with the raw amino-acid sequence, 216 residues long: Adenylate kinase (216 aa).

11 to 16 (GSGKGT) lines the ATP pocket. The segment at 31–60 (ATGDLFRKAIECGDELGDTVKSYMERGELV) is NMP. AMP-binding positions include Thr-32, Arg-37, 58–60 (ELV), 86–89 (GFPR), and Gln-93. The interval 127–163 (GRWVCRSCQSPYQSGCAEVTKGKCSRCQGGLYQRPDD) is LID. Residue Arg-128 coordinates ATP. Zn(2+)-binding residues include Cys-131, Cys-134, Cys-150, and Cys-153. Positions 160 and 171 each coordinate AMP. Ala-199 contacts ATP.

This sequence belongs to the adenylate kinase family. Monomer.

The protein resides in the cytoplasm. It carries out the reaction AMP + ATP = 2 ADP. The protein operates within purine metabolism; AMP biosynthesis via salvage pathway; AMP from ADP: step 1/1. Functionally, catalyzes the reversible transfer of the terminal phosphate group between ATP and AMP. Plays an important role in cellular energy homeostasis and in adenine nucleotide metabolism. This Dehalococcoides mccartyi (strain CBDB1) protein is Adenylate kinase.